We begin with the raw amino-acid sequence, 577 residues long: E3 ubiquitin-protein ligase MSL2 (577 aa).

The sufficient for interaction with MSL1 stretch occupies residues 1 to 116 (MNPVNATALY…CEYITQTTLA (116 aa)). Residues cysteine 44, cysteine 47, cysteine 62, histidine 64, cysteine 67, cysteine 70, cysteine 81, and cysteine 84 each contribute to the Zn(2+) site. The RING-type zinc finger occupies 44–85 (CCVCGHLLQDPIAPTNSTCQHYVCKTCKGKKMMMKPSCSWCK). Residue lysine 375 forms a Glycyl lysine isopeptide (Lys-Gly) (interchain with G-Cter in SUMO2) linkage. A disordered region spans residues 405 to 428 (TKSMKKSHEHGSKKSHSKSKPGIL). The segment covering 407–423 (SMKKSHEHGSKKSHSKS) has biased composition (basic residues). Serine 447 is subject to Phosphoserine. A CXC MSL2-type domain is found at 457-508 (QEKKGCKCGRATQNPSVLTCRGQRCPCYSNRKACLDCICRGCQNSYMANGEK). Residues cysteine 462, cysteine 464, cysteine 476, cysteine 481, cysteine 483, cysteine 490, cysteine 493, cysteine 495, and cysteine 498 each coordinate Zn(2+).

It belongs to the MSL2 family. Component of a multisubunit histone acetyltransferase complex (MSL) at least composed of the KAT8/MOF/MYST1, MSL1/hampin, MSL2 and MSL3. Forms a MSL heterotetrameric core with MSL1.

The protein localises to the nucleus. It is found in the chromosome. It carries out the reaction S-ubiquitinyl-[E2 ubiquitin-conjugating enzyme]-L-cysteine + [acceptor protein]-L-lysine = [E2 ubiquitin-conjugating enzyme]-L-cysteine + N(6)-ubiquitinyl-[acceptor protein]-L-lysine.. It functions in the pathway protein modification; protein ubiquitination. Non-catalytic component of the MSL histone acetyltransferase complex, a multiprotein complex that mediates the majority of histone H4 acetylation at 'Lys-16' (H4K16ac), an epigenetic mark that prevents chromatin compaction. The MSL complex is required for chromosome stability and genome integrity by maintaining homeostatic levels of H4K16ac. The MSL complex is also involved in gene dosage by promoting up-regulation of genes expressed by the X chromosome. X up-regulation is required to compensate for autosomal biallelic expression. The MSL complex also participates in gene dosage compensation by promoting expression of Tsix non-coding RNA. MSL2 plays a key role in gene dosage by ensuring biallelic expression of a subset of dosage-sensitive genes, including many haploinsufficient genes. Acts by promoting promoter-enhancer contacts, thereby preventing DNA methylation of one allele and creating a methylation-free environment for methylation-sensitive transcription factors such as SP1, KANSL1 and KANSL3. Also acts as an E3 ubiquitin ligase that promotes monoubiquitination of histone H2B at 'Lys-35' (H2BK34Ub), but not that of H2A. This activity is greatly enhanced by heterodimerization with MSL1. H2B ubiquitination in turn stimulates histone H3 methylation at 'Lys-4' (H3K4me) and 'Lys-79' (H3K79me) and leads to gene activation, including that of HOXA9 and MEIS1. This Mus musculus (Mouse) protein is E3 ubiquitin-protein ligase MSL2.